Consider the following 399-residue polypeptide: LEM domain-containing protein Bocksbeutel (399 aa).

Residues 4-48 enclose the LEM domain; it reads LSYLDTLGNKELLAKCLEHGLPGVPVTDSTRSVIIRRLKAKITGV. Disordered stretches follow at residues 49-103, 119-141, and 233-287; these read PLNK…EQSR, SVQT…SYMV, and NSTS…SNLA. Composition is skewed to polar residues over residues 68–77 and 89–99; these read HGSQVTTPTS and GRTSSNNNKIS. Over residues 233 to 256 the composition is skewed to polar residues; sequence NSTSYEESSTYNPKLSPISPRNTF. A helical transmembrane segment spans residues 377 to 397; that stretch reads FYLILVVSVMLATMVYVVLTP.

The protein localises to the nucleus inner membrane. It is found in the cytoplasm. Its subcellular location is the nucleus. The protein resides in the nucleoplasm. It localises to the endoplasmic reticulum. Inner nuclear membrane protein. May have a role in maintaining the structural integrity of the nuclear lamina. During pupal development, plays essential and redundant functions with the other LEM domain proteins; MAN1 and Ote. Also has a redundant but important role with Ote in larval development. The sequence is that of LEM domain-containing protein Bocksbeutel from Drosophila melanogaster (Fruit fly).